The sequence spans 132 residues: Hemoglobin subunit beta-1 (132 aa).

Residues 1–132 (WSKIDIDVCG…VVSALGRQYH (132 aa)) enclose the Globin domain. His-49 and His-78 together coordinate heme b.

The protein belongs to the globin family. Hb 1 is a heterotetramer of two alpha-1 and two beta-1 chains. Hb 2 is a heterotetramer of two alpha-2 and two beta-1 chains. In terms of tissue distribution, red blood cells.

In terms of biological role, involved in oxygen transport from gills to the various peripheral tissues. This is Hemoglobin subunit beta-1 (hbb1) from Arctogadus glacialis (Arctic cod).